The chain runs to 885 residues: Sensor histidine kinase KdpD (885 aa).

4 helical membrane passes run 384–404 (AIDM…GLWI), 415–435 (IILM…RSFI), 436–456 (IGFL…TEPR), and 464–484 (FDYP…SALL). The Histidine kinase domain maps to 660 to 880 (SISHDIRTPL…IFYFNIYTDF (221 aa)). His-663 carries the post-translational modification Phosphohistidine; by autocatalysis.

The protein localises to the membrane. The catalysed reaction is ATP + protein L-histidine = ADP + protein N-phospho-L-histidine.. With respect to regulation, cyclic di-AMP is a negative regulator of the Kdp system. Functionally, member of the two-component regulatory system KdpD/KdpE that regulates the transcription of a series of virulence factors through sensing external K(+) concentrations. Also regulates capsular polysaccharide production. May function as a membrane-associated protein kinase that phosphorylates KdpE in response to environmental signals. In turn, KpdE functions as a transcriptional regulator by direct binding to promoter regions of target genes including spa, hla, aur and geh. This is Sensor histidine kinase KdpD from Staphylococcus aureus (strain NCTC 8325 / PS 47).